We begin with the raw amino-acid sequence, 1175 residues long: Atrophin-1 (1175 aa).

Disordered regions lie at residues 1 to 595 (MKTR…VTTS), 608 to 752 (SSPA…ARFN), and 770 to 847 (VPLE…HRPP). The Nuclear localization signal motif lies at 16-32 (RKKEAPGPREELRSRGR). Basic and acidic residues predominate over residues 17 to 29 (KKEAPGPREELRS). Ser34 carries the post-translational modification Phosphoserine. Basic and acidic residues predominate over residues 45 to 63 (GKAEKSRQTAKKARIEEPS). Phosphoserine occurs at positions 77, 79, 101, 103, and 107. Positions 108–128 (LDGRSINDDGSSDPRDIDQDN) are enriched in basic and acidic residues. Positions 129–152 (RSTSPSIYSPGSVENDSDSSSGLS) are enriched in polar residues. Composition is skewed to pro residues over residues 158 to 174 (PYHPPPLFPPSPPPPDS) and 208 to 217 (GPPPGAPPTH). Low complexity-rich tracts occupy residues 240–253 (GAAASSVGAPSGGK) and 262–273 (IPISSSGASGAP). A compositionally biased stretch (pro residues) spans 345-374 (PPGPEKGPTLAPSPHPLPPASSSAPGPPMR). Over residues 378 to 396 (SSSSSSAAASSSSSSSSAS) the composition is skewed to low complexity. The span at 416-437 (SMSVSNQPPKYTQPSLPSQAVW) shows a compositional bias: polar residues. Residues 476-491 (THHHHQQQPQQQHHHG) are compositionally biased toward basic residues. An involved in binding BAIAP2 region spans residues 503-553 (HPLESSNSHHAHPYNMSPSLGSLRPYPPGPAHLPPPHGQVSYNQAGPNGPP). Pro residues predominate over residues 527–539 (PYPPGPAHLPPPH). Residues 547-584 (AGPNGPPVSSSNSSGSSSQASYSCSHPSSSQGPQGASY) show a composition bias toward low complexity. Ser617 is modified (phosphoserine). N6-acetyllysine is present on Lys626. Thr638 is subject to Phosphothreonine. Phosphoserine is present on Ser646. A Phosphothreonine modification is found at Thr654. Pro residues-rich tracts occupy residues 693–703 (LPPPPAAPTTG) and 722–737 (PESPVPPARSPSPPPK). The residue at position 724 (Ser724) is a Phosphoserine; by MAPK8. Residues Ser731 and Ser733 each carry the phosphoserine modification. Residues 780-824 (KRADLVEKVRREAEQRAREEKEREREREREKEREREKERELERSV) are compositionally biased toward basic and acidic residues. Residues 864 to 879 (DTPALRTLSEYARPHV) are required for interaction with FAT1. Residue Ser881 is modified to Phosphoserine. The interval 913–932 (PAAREREREARERDLRDRLK) is disordered. Over residues 914-932 (AAREREREARERDLRDRLK) the composition is skewed to basic and acidic residues. The Nuclear export signal motif lies at 1018–1026 (ALGNDPLAR). Position 1100 is an asymmetric dimethylarginine (Arg1100). Residue Lys1168 forms a Glycyl lysine isopeptide (Lys-Gly) (interchain with G-Cter in SUMO2) linkage.

Interacts with BAIAP2, WWP1, WWP2, WWP3 and RERE. Interacts (via its N-terminus) with MTG8; the interaction enhances transcriptional repression of MTG8. Interacts with PQBP1. Interacts with NR2E1; the interaction represses the transcriptional activity of NR2E1. Interacts with FAT1 (via a C-terminal domain). In terms of processing, phosphorylated in vitro by MAPK8/JNK1 on Ser-724. In terms of tissue distribution, widely expressed. Most abundant in the brain.

The protein localises to the cytoplasm. It is found in the perinuclear region. Its subcellular location is the cell junction. It localises to the nucleus. Transcriptional corepressor. Corepressor of MTG8 transcriptional repression. Has some intrinsic repression activity which is independent of the number of the poly-Q repeats. Recruits NR2E1 to repress transcription. Promotes vascular smooth cell (VSMC) migration and orientation. The chain is Atrophin-1 (Atn1) from Mus musculus (Mouse).